We begin with the raw amino-acid sequence, 597 residues long: Protein IQ-DOMAIN 29 (597 aa).

Residues 1–31 (MGKTPSPGKWIKSLLGKKSSKSSLEKGGEKL) form a disordered region. 3 consecutive IQ domains span residues 106-134 (LEEA…GITR), 135-153 (VQAV…ATYS), and 157-183 (GIVK…QKTN). Residues 159–173 (VKVQALVRGKKARSS) form a calmodulin-binding region. A Nuclear localization signal 1 motif is present at residues 264–271 (KKRSFQAV). Disordered regions lie at residues 268–379 (FQAV…KKEI) and 407–597 (LIPV…EWKR). A compositionally biased stretch (low complexity) spans 289–300 (STTANSSTSRST). The span at 319 to 329 (ELSKIENDKSK) shows a compositional bias: basic and acidic residues. Positions 356–363 (HKKASLSN) match the Nuclear localization signal 2 motif. Positions 414-463 (KESDLDKDEKSLVLDKPEQDELRTAERDDKAEEELKTAERDDSAEEKIQE) are enriched in basic and acidic residues. The segment covering 467-480 (QISSENGNVASENT) has biased composition (polar residues). Basic and acidic residues predominate over residues 481–500 (KPSDRRASLPAKIENHHQDD). The segment covering 572–584 (GSMNSDRSFSSSK) has biased composition (polar residues). Residues 585-597 (DIGDKSTKAEWKR) show a composition bias toward basic and acidic residues.

This sequence belongs to the IQD family. As to quaternary structure, binds to multiple calmodulin (CaM) in the presence of Ca(2+) and CaM-like proteins.

Its subcellular location is the nucleus. It localises to the nucleus envelope. The protein localises to the cytoplasm. The protein resides in the cytoskeleton. It is found in the cell membrane. Its function is as follows. May be involved in cooperative interactions with calmodulins or calmodulin-like proteins. Recruits calmodulin proteins to microtubules, thus being a potential scaffold in cellular signaling and trafficking. May associate with nucleic acids and regulate gene expression at the transcriptional or post-transcriptional level. The protein is Protein IQ-DOMAIN 29 of Arabidopsis thaliana (Mouse-ear cress).